A 205-amino-acid polypeptide reads, in one-letter code: Imidazole glycerol phosphate synthase subunit HisH (205 aa).

The Glutamine amidotransferase type-1 domain occupies 3–205 (KIGLIDYGMG…LLRRWLSNIQ (203 aa)). Cysteine 81 functions as the Nucleophile in the catalytic mechanism. Active-site residues include histidine 185 and glutamate 187.

Heterodimer of HisH and HisF.

It is found in the cytoplasm. It catalyses the reaction 5-[(5-phospho-1-deoxy-D-ribulos-1-ylimino)methylamino]-1-(5-phospho-beta-D-ribosyl)imidazole-4-carboxamide + L-glutamine = D-erythro-1-(imidazol-4-yl)glycerol 3-phosphate + 5-amino-1-(5-phospho-beta-D-ribosyl)imidazole-4-carboxamide + L-glutamate + H(+). The catalysed reaction is L-glutamine + H2O = L-glutamate + NH4(+). It functions in the pathway amino-acid biosynthesis; L-histidine biosynthesis; L-histidine from 5-phospho-alpha-D-ribose 1-diphosphate: step 5/9. In terms of biological role, IGPS catalyzes the conversion of PRFAR and glutamine to IGP, AICAR and glutamate. The HisH subunit catalyzes the hydrolysis of glutamine to glutamate and ammonia as part of the synthesis of IGP and AICAR. The resulting ammonia molecule is channeled to the active site of HisF. This chain is Imidazole glycerol phosphate synthase subunit HisH, found in Prochlorococcus marinus (strain MIT 9312).